Reading from the N-terminus, the 392-residue chain is MYSSQASALPSRVIGLISGTSVDGIDAALVEITGTELDLKVELLAGKTYPYPAELRERILAVCAGEAISMLELADMDDAIALAFAQAAQNIQIGYQPVNLIGSHGQTVYHRPPKEAGVGKKTLGYTLQLGRGEMIAYLTGITTVSNFRVADIAVGGHGAPLVPRVDAFLLSHPHESRCIQNLGGIGNLAYIPARTDGWLSQIRGWDTGPSNSLLDLAVERLTAGAKTYDEDGQWAASGTPCYPLVEKWLTHEYFHLSPPKSTGRELFGVAYLNQCFQDAEPYQLSPADMLATLTELTVASIVHSYRTFLPQMPQRVFLCGGGSRNLYLKQRLQLALETIPVLTTDEAGVSADFKEAIAFAVLAHWRQLGIPGNLPTATGAPQEVLLGEIHQG.

19–26 (GTSVDGID) provides a ligand contact to ATP.

The protein belongs to the anhydro-N-acetylmuramic acid kinase family.

The enzyme catalyses 1,6-anhydro-N-acetyl-beta-muramate + ATP + H2O = N-acetyl-D-muramate 6-phosphate + ADP + H(+). Its pathway is amino-sugar metabolism; 1,6-anhydro-N-acetylmuramate degradation. The protein operates within cell wall biogenesis; peptidoglycan recycling. Catalyzes the specific phosphorylation of 1,6-anhydro-N-acetylmuramic acid (anhMurNAc) with the simultaneous cleavage of the 1,6-anhydro ring, generating MurNAc-6-P. Is required for the utilization of anhMurNAc either imported from the medium or derived from its own cell wall murein, and thus plays a role in cell wall recycling. The chain is Anhydro-N-acetylmuramic acid kinase from Trichormus variabilis (strain ATCC 29413 / PCC 7937) (Anabaena variabilis).